The sequence spans 79 residues: Translational regulator CsrA (79 aa).

It belongs to the CsrA/RsmA family. As to quaternary structure, homodimer; the beta-strands of each monomer intercalate to form a hydrophobic core, while the alpha-helices form wings that extend away from the core.

It localises to the cytoplasm. Functionally, a translational regulator that binds mRNA to regulate translation initiation and/or mRNA stability. Usually binds in the 5'-UTR at or near the Shine-Dalgarno sequence preventing ribosome-binding, thus repressing translation. Its main target seems to be the major flagellin gene, while its function is anatagonized by FliW. The protein is Translational regulator CsrA of Helicobacter hepaticus (strain ATCC 51449 / 3B1).